The sequence spans 141 residues: Hemoglobin subunit alpha (141 aa).

One can recognise a Globin domain in the interval 2–141 (AFTACEKQTI…ICQELSSRYR (140 aa)). His59 provides a ligand contact to O2. His88 serves as a coordination point for heme b.

The protein belongs to the globin family. In terms of assembly, heterotetramer of two alpha chains and two beta chains. Red blood cells.

Its function is as follows. Involved in oxygen transport from gills to the various peripheral tissues. The chain is Hemoglobin subunit alpha (HBA) from Mustelus griseus (Spotless smooth-hound).